The chain runs to 291 residues: Membrane protein insertase YidC (291 aa).

The N-terminal stretch at 1 to 19 (MKKKALLPLLLGVMVFLAG) is a signal peptide. Cys-20 carries N-palmitoyl cysteine lipidation. Residue Cys-20 is the site of S-diacylglycerol cysteine attachment. 4 helical membrane passes run 56–76 (YGIAIIVLVLVIRIILLPFML), 134–154 (ALGCLPVLIQMPVVMGLYFVL), 170–190 (WFNLIHPDIWITIIAGVLYFI), and 211–231 (MIVSPIMIIWISLSSASALGL). Residues 266-291 (FKENNSNSNKKGKNTQVVSKNNKKKK) form a disordered region.

This sequence belongs to the OXA1/ALB3/YidC family. Type 2 subfamily.

It localises to the cell membrane. Functionally, required for the insertion and/or proper folding and/or complex formation of integral membrane proteins into the membrane. Involved in integration of membrane proteins that insert both dependently and independently of the Sec translocase complex, as well as at least some lipoproteins. This chain is Membrane protein insertase YidC, found in Staphylococcus haemolyticus (strain JCSC1435).